A 212-amino-acid polypeptide reads, in one-letter code: Large ribosomal subunit protein uL1 (212 aa).

The protein belongs to the universal ribosomal protein uL1 family. Part of the 50S ribosomal subunit.

Functionally, binds directly to 23S rRNA. Probably involved in E site tRNA release. In terms of biological role, protein L1 is also a translational repressor protein, it controls the translation of its operon by binding to its mRNA. The sequence is that of Large ribosomal subunit protein uL1 from Methanothrix thermoacetophila (strain DSM 6194 / JCM 14653 / NBRC 101360 / PT) (Methanosaeta thermophila).